A 571-amino-acid chain; its full sequence is Sulfite reductase [NADPH] hemoprotein beta-component (571 aa).

The [4Fe-4S] cluster site is built by cysteine 436, cysteine 442, cysteine 481, and cysteine 485. Cysteine 485 lines the siroheme pocket.

The protein belongs to the nitrite and sulfite reductase 4Fe-4S domain family. In terms of assembly, alpha(8)-beta(8). The alpha component is a flavoprotein, the beta component is a hemoprotein. The cofactor is siroheme. Requires [4Fe-4S] cluster as cofactor.

It carries out the reaction hydrogen sulfide + 3 NADP(+) + 3 H2O = sulfite + 3 NADPH + 4 H(+). The protein operates within sulfur metabolism; hydrogen sulfide biosynthesis; hydrogen sulfide from sulfite (NADPH route): step 1/1. Its function is as follows. Component of the sulfite reductase complex that catalyzes the 6-electron reduction of sulfite to sulfide. This is one of several activities required for the biosynthesis of L-cysteine from sulfate. The protein is Sulfite reductase [NADPH] hemoprotein beta-component (cysI) of Bacillus subtilis (strain 168).